Consider the following 29-residue polypeptide: Kappa-sparatoxin-Hv1e (29 aa).

3 disulfide bridges follow: C3/C17, C10/C22, and C16/C26.

Expressed by the venom gland.

The protein localises to the secreted. Its function is as follows. Inhibitor of voltage-gated potassium channels of the Kv4/KCND family. Blocks calcium channels (Cav). This Heteropoda venatoria (Brown huntsman spider) protein is Kappa-sparatoxin-Hv1e.